The sequence spans 111 residues: MLVSMLLIIFPNGVSLSTPSLSSRNKFILRSRSSRLRFSARSFLSSASRLVNSSKMTLAFERLLRLRRVSFTKKFSSSDEDKSRDVRRRLRPASEATGAFAVRGADCAIAD.

The N-terminal stretch at 1 to 16 is a signal peptide; it reads MLVSMLLIIFPNGVSL. N-linked (GlcNAc...) asparagine glycosylation is present at N52. A disordered region spans residues 73–92; sequence KKFSSSDEDKSRDVRRRLRP. The RxLR-dEER signature appears at 88–91; that stretch reads RRLR.

The protein belongs to the RxLR effector family.

The protein resides in the secreted. Its subcellular location is the host nucleus. It is found in the host cytoplasm. Its function is as follows. Secreted effector that partially suppresses the host cell death induced by cell death-inducing proteins. In Plasmopara viticola (Downy mildew of grapevine), this protein is Secreted RxLR effector protein 81.